Reading from the N-terminus, the 157-residue chain is S-ribosylhomocysteine lyase (157 aa).

Fe cation is bound by residues H54, H58, and C124.

The protein belongs to the LuxS family. In terms of assembly, homodimer. Fe cation serves as cofactor.

It carries out the reaction S-(5-deoxy-D-ribos-5-yl)-L-homocysteine = (S)-4,5-dihydroxypentane-2,3-dione + L-homocysteine. In terms of biological role, involved in the synthesis of autoinducer 2 (AI-2) which is secreted by bacteria and is used to communicate both the cell density and the metabolic potential of the environment. The regulation of gene expression in response to changes in cell density is called quorum sensing. Catalyzes the transformation of S-ribosylhomocysteine (RHC) to homocysteine (HC) and 4,5-dihydroxy-2,3-pentadione (DPD). The sequence is that of S-ribosylhomocysteine lyase from Lacticaseibacillus paracasei (strain ATCC 334 / BCRC 17002 / CCUG 31169 / CIP 107868 / KCTC 3260 / NRRL B-441) (Lactobacillus paracasei).